The sequence spans 295 residues: Tetrahydromethanopterin S-methyltransferase subunit E (295 aa).

7 helical membrane-spanning segments follow: residues 4 to 24 (MITGLGVVALMGAAATIAGAA), 60 to 80 (GEPVAYGTWCGIAGSVAFVLM), 87 to 107 (VIMAIAIGAVIAAMVHTTYAV), 140 to 160 (GFIVTFCTVGLSYLMTLPIPG), 161 to 181 (FAHPFPLPLLAVLWGITIGAI), 234 to 254 (YGGPLTGFAFGAIVFLSFWNT), and 255 to 275 (IVFGITGGIISGLIIVLLLII).

It belongs to the MtrE family. In terms of assembly, the complex is composed of 8 subunits; MtrA, MtrB, MtrC, MtrD, MtrE, MtrF, MtrG and MtrH.

Its subcellular location is the cell membrane. It carries out the reaction 5-methyl-5,6,7,8-tetrahydromethanopterin + coenzyme M + 2 Na(+)(in) = 5,6,7,8-tetrahydromethanopterin + methyl-coenzyme M + 2 Na(+)(out). It participates in one-carbon metabolism; methanogenesis from CO(2); methyl-coenzyme M from 5,10-methylene-5,6,7,8-tetrahydromethanopterin: step 2/2. In terms of biological role, part of a complex that catalyzes the formation of methyl-coenzyme M and tetrahydromethanopterin from coenzyme M and methyl-tetrahydromethanopterin. This is an energy-conserving, sodium-ion translocating step. This is Tetrahydromethanopterin S-methyltransferase subunit E from Methanothermobacter marburgensis (strain ATCC BAA-927 / DSM 2133 / JCM 14651 / NBRC 100331 / OCM 82 / Marburg) (Methanobacterium thermoautotrophicum).